A 284-amino-acid polypeptide reads, in one-letter code: 2-dehydro-3-deoxyphosphooctonate aldolase (284 aa).

This sequence belongs to the KdsA family.

It localises to the cytoplasm. It catalyses the reaction D-arabinose 5-phosphate + phosphoenolpyruvate + H2O = 3-deoxy-alpha-D-manno-2-octulosonate-8-phosphate + phosphate. Its pathway is carbohydrate biosynthesis; 3-deoxy-D-manno-octulosonate biosynthesis; 3-deoxy-D-manno-octulosonate from D-ribulose 5-phosphate: step 2/3. It functions in the pathway bacterial outer membrane biogenesis; lipopolysaccharide biosynthesis. This is 2-dehydro-3-deoxyphosphooctonate aldolase from Paraburkholderia xenovorans (strain LB400).